The chain runs to 748 residues: 5-methyltetrahydropteroyltriglutamate--homocysteine methyltransferase (748 aa).

Lysine 111 serves as a coordination point for 5-methyltetrahydropteroyltri-L-glutamate. L-homocysteine is bound by residues 428-430 (IGS) and glutamate 478. L-methionine-binding positions include 428–430 (IGS) and glutamate 478. 5-methyltetrahydropteroyltri-L-glutamate contacts are provided by residues 509–510 (RC) and tryptophan 555. Residue aspartate 593 participates in L-homocysteine binding. Aspartate 593 lines the L-methionine pocket. Residue glutamate 599 participates in 5-methyltetrahydropteroyltri-L-glutamate binding. Zn(2+) contacts are provided by histidine 635, cysteine 637, and glutamate 659. The active-site Proton donor is histidine 687. Residue cysteine 719 coordinates Zn(2+).

This sequence belongs to the vitamin-B12 independent methionine synthase family. Zn(2+) is required as a cofactor.

It catalyses the reaction 5-methyltetrahydropteroyltri-L-glutamate + L-homocysteine = tetrahydropteroyltri-L-glutamate + L-methionine. It participates in amino-acid biosynthesis; L-methionine biosynthesis via de novo pathway; L-methionine from L-homocysteine (MetE route): step 1/1. Functionally, catalyzes the transfer of a methyl group from 5-methyltetrahydrofolate to homocysteine resulting in methionine formation. The polypeptide is 5-methyltetrahydropteroyltriglutamate--homocysteine methyltransferase (Herpetosiphon aurantiacus (strain ATCC 23779 / DSM 785 / 114-95)).